We begin with the raw amino-acid sequence, 447 residues long: GTPase Der (447 aa).

EngA-type G domains follow at residues 3 to 167 (PVIA…FAER) and 181 to 354 (TRIA…AAAM). Residues 9–16 (GRPNVGKS), 56–60 (DTGGF), 119–122 (NKAE), 187–194 (GRPNVGKS), 234–238 (DTAGL), and 299–302 (NKWD) contribute to the GTP site. In terms of domain architecture, KH-like spans 355-439 (VKLPTPKLTR…PLRIEFRTNK (85 aa)).

Belongs to the TRAFAC class TrmE-Era-EngA-EngB-Septin-like GTPase superfamily. EngA (Der) GTPase family. Associates with the 50S ribosomal subunit.

Functionally, GTPase that plays an essential role in the late steps of ribosome biogenesis. This chain is GTPase Der, found in Ralstonia nicotianae (strain ATCC BAA-1114 / GMI1000) (Ralstonia solanacearum).